The following is a 426-amino-acid chain: Enolase (426 aa).

Position 163 (Gln163) interacts with (2R)-2-phosphoglycerate. The active-site Proton donor is Glu205. Positions 242, 283, and 310 each coordinate Mg(2+). The (2R)-2-phosphoglycerate site is built by Lys335, Arg364, Ser365, and Lys386. The active-site Proton acceptor is Lys335.

The protein belongs to the enolase family. Mg(2+) is required as a cofactor.

The protein localises to the cytoplasm. Its subcellular location is the secreted. It is found in the cell surface. The enzyme catalyses (2R)-2-phosphoglycerate = phosphoenolpyruvate + H2O. Its pathway is carbohydrate degradation; glycolysis; pyruvate from D-glyceraldehyde 3-phosphate: step 4/5. Its function is as follows. Catalyzes the reversible conversion of 2-phosphoglycerate (2-PG) into phosphoenolpyruvate (PEP). It is essential for the degradation of carbohydrates via glycolysis. The chain is Enolase from Arthrobacter sp. (strain FB24).